A 422-amino-acid chain; its full sequence is Adhesin YadA (422 aa).

Positions 1 to 25 (MTKDFKISVSAALISALFSSPYAFA) are cleaved as a signal peptide. The interval 26 to 330 (NNDEVHFTAV…KKAIRESNQY (305 aa)) is surface exposed passenger domain. Positions 216–362 (EKTQENANKK…LASSAALNSL (147 aa)) form a coiled coil. An outer membrane translocation of the passenger domain region spans residues 331–369 (TDHKFHQLDNRLDKLDTRVDKGLASSAALNSLFQPYGVG). A run of 4 beta stranded transmembrane segments spans residues 369 to 379 (GKVNFTAGVGG), 383 to 394 (SQALAIGSGYRV), 401 to 407 (KAGVAYA), and 411 to 422 (DVMYNASFNIEW). Residues 370-422 (KVNFTAGVGGYRSSQALAIGSGYRVNESVALKAGVAYAGSSDVMYNASFNIEW) are translocator domain.

This sequence belongs to the autotransporter-2 (AT-2) (TC 1.B.40) family. In terms of assembly, homotrimer.

The protein localises to the cell surface. Its subcellular location is the cell outer membrane. Its function is as follows. Collagen-binding outer membrane protein forming a fibrillar matrix on the bacterial cell surface. Promotes initial attachment and invasion of eukaryotic cells. Also protects the bacteria by being responsible for agglutination, serum resistance, complement inactivation and phagocytosis resistance. The sequence is that of Adhesin YadA (yadA) from Yersinia enterocolitica.